The primary structure comprises 1089 residues: SUMO-specific isopeptidase USPL1 (1089 aa).

Positions 90-128 are disordered; sequence LISPDSEDCPTPSKPQKRKRLETNCRNSPLPVHSKKTRS. A USP domain is found at 215-488; that stretch reads VQWKNTQALC…ETHIVIWERK (274 aa). Cys-224 serves as the catalytic Nucleophile. Residues 224 to 483 are SUMO-binding; sequence CWLDCILSAL…EVPASETHIV (260 aa). The active-site Proton acceptor is the His-444. 4 disordered regions span residues 687–739, 791–817, 835–868, and 891–928; these read DSQT…KEDQ, ISRRSKRMSRKAKHMEELSPRNSSPPL, LREQEGSRPAPLRHRSPGNESAISPASRGDAAED, and LISSPHREPSLSDHSEPASHCGTPASDQSEPVSHCGSP. Residues 719-733 are compositionally biased toward polar residues; that stretch reads TASSKTVAARSAQNQ. Over residues 791-803 the composition is skewed to basic residues; the sequence is ISRRSKRMSRKAK. Ser-894 carries the post-translational modification Phosphoserine. Basic and acidic residues predominate over residues 895-907; the sequence is PHREPSLSDHSEP.

The protein belongs to the peptidase C19 family. Interacts with ELL.

Its subcellular location is the nucleus. The protein localises to the cajal body. In terms of biological role, SUMO-specific isopeptidase involved in protein desumoylation. Specifically binds SUMO proteins with a higher affinity for SUMO2 and SUMO3 which it cleaves more efficiently. Also able to process full-length SUMO proteins to their mature forms. Plays a key role in RNA polymerase-II-mediated snRNA transcription in the Cajal bodies. Is a component of complexes that can bind to U snRNA genes. The polypeptide is SUMO-specific isopeptidase USPL1 (Uspl1) (Mus musculus (Mouse)).